Reading from the N-terminus, the 849-residue chain is Autoinducer 1 sensor kinase/phosphatase LuxN (849 aa).

7 helical membrane passes run 9–29, 41–61, 160–180, 196–216, 220–242, 251–275, and 283–301; these read IVYA…MWLF, VIFG…IAWI, SYFF…LVAM, IAGI…MTYF, FSLT…YALL, YIAY…AIFI, and WLIA…QLLY. A Histidine kinase domain is found at 468–683; it reads SIAHEMRNPL…EFHLYFPVVP (216 aa). A Phosphohistidine; by autocatalysis modification is found at histidine 471. The 114-residue stretch at 722 to 835 folds into the Response regulatory domain; the sequence is TVLIVDDKEV…ALRHVLGNWL (114 aa). Aspartate 771 is modified (4-aspartylphosphate).

Its subcellular location is the cell inner membrane. It catalyses the reaction ATP + protein L-histidine = ADP + protein N-phospho-L-histidine.. The phosphatase activity is constitutive and the kinase activity is regulated by the presence or absence of AI-1. At low cell density the kinase activity overrides the phosphatase activity. Its function is as follows. At low cell density, in the absence of AI-1 (autoinducer 1), LuxN has a kinase activity and autophosphorylates on His-471. The phosphoryl group is then transferred on Asp-771 of the response regulator domain. The phosphoryl group is transferred to LuxU, and ultimately to LuxO. At high cell density, in the presence of AI-1, the kinase activity is inactivated, and the response regulator domain has a phosphatase activity. LuxN phosphatase acts on itself. As LuxU could function to establish an equilibrium between the aspartyl-phosphate of LuxN and the aspartyl-phosphate of LuxO, LuxU transfers phosphate from LuxO to LuxN and finally phosphate is drained from the system. This chain is Autoinducer 1 sensor kinase/phosphatase LuxN (luxN), found in Vibrio campbellii (strain ATCC BAA-1116).